A 361-amino-acid chain; its full sequence is AT-hook motif nuclear-localized protein 12 (361 aa).

2 disordered regions span residues 29–143 (SQVA…GRKQ) and 286–361 (NNKT…LTRG). Over residues 48–59 (SNPNIHHPQANN) the composition is skewed to polar residues. The segment covering 85 to 95 (QPPPPPPPPEE) has biased composition (pro residues). Residues 99–107 (KRKRGRPRK) carry the Bipartite nuclear localization signal motif. 2 DNA-binding regions (a.T hook) span residues 99–111 (KRKR…YGEP) and 130–142 (KRAR…TGRK). A PPC domain is found at 154-297 (TSAGLAFAPH…KTIRQEKEPN (144 aa)). Residues 306–322 (ETTPGSAAEPAASAGQQ) show a composition bias toward low complexity.

Homodimer. Interacts with AHL27, AHL29 and ATAF2/NAC081.

Its subcellular location is the nucleus. Its function is as follows. Transcription factor that specifically binds AT-rich DNA sequences related to the nuclear matrix attachment regions (MARs). In Arabidopsis thaliana (Mouse-ear cress), this protein is AT-hook motif nuclear-localized protein 12.